Reading from the N-terminus, the 205-residue chain is 3-demethoxyubiquinol 3-hydroxylase (205 aa).

6 residues coordinate Fe cation: Glu-54, Glu-84, His-87, Glu-136, Glu-168, and His-171.

This sequence belongs to the COQ7 family. It depends on Fe cation as a cofactor.

It localises to the cell membrane. The enzyme catalyses a 5-methoxy-2-methyl-3-(all-trans-polyprenyl)benzene-1,4-diol + AH2 + O2 = a 3-demethylubiquinol + A + H2O. It participates in cofactor biosynthesis; ubiquinone biosynthesis. Catalyzes the hydroxylation of 2-nonaprenyl-3-methyl-6-methoxy-1,4-benzoquinol during ubiquinone biosynthesis. The sequence is that of 3-demethoxyubiquinol 3-hydroxylase from Paracidovorax citrulli (strain AAC00-1) (Acidovorax citrulli).